Reading from the N-terminus, the 444-residue chain is Homogentisate 1,2-dioxygenase (444 aa).

H298 serves as the catalytic Proton acceptor. Positions 341 and 347 each coordinate Fe cation. Homogentisate contacts are provided by Y356 and H377. H377 serves as a coordination point for Fe cation.

The protein belongs to the homogentisate dioxygenase family. In terms of assembly, hexamer; dimer of trimers. Fe cation is required as a cofactor.

It catalyses the reaction homogentisate + O2 = 4-maleylacetoacetate + H(+). The protein operates within amino-acid degradation; L-phenylalanine degradation; acetoacetate and fumarate from L-phenylalanine: step 4/6. Functionally, involved in the catabolism of homogentisate (2,5-dihydroxyphenylacetate or 2,5-OH-PhAc), a central intermediate in the degradation of phenylalanine and tyrosine. Catalyzes the oxidative ring cleavage of the aromatic ring of homogentisate to yield maleylacetoacetate. The protein is Homogentisate 1,2-dioxygenase of Burkholderia ambifaria (strain MC40-6).